A 543-amino-acid chain; its full sequence is CTP synthase (543 aa).

Residues 1–265 form an amidoligase domain region; the sequence is MTRFVFITGG…DTEVLRHFGL (265 aa). Ser-13 is a binding site for CTP. Ser-13 is a UTP binding site. ATP is bound at residue 14–19; it reads SLGKGI. Residue Tyr-54 participates in L-glutamine binding. An ATP-binding site is contributed by Asp-71. 2 residues coordinate Mg(2+): Asp-71 and Glu-139. Residues 146–148, 186–191, and Lys-222 each bind CTP; these read DIE and KTKPTQ. UTP-binding positions include 186–191 and Lys-222; that span reads KTKPTQ. Residues 291–542 form the Glutamine amidotransferase type-1 domain; that stretch reads RIAVVGKYTA…VGAAVKKMRL (252 aa). Position 354 (Gly-354) interacts with L-glutamine. The Nucleophile; for glutamine hydrolysis role is filled by Cys-381. Residues 382-385, Glu-405, and Arg-470 each bind L-glutamine; that span reads FGMQ. Catalysis depends on residues His-515 and Glu-517.

This sequence belongs to the CTP synthase family. Homotetramer.

The catalysed reaction is UTP + L-glutamine + ATP + H2O = CTP + L-glutamate + ADP + phosphate + 2 H(+). The enzyme catalyses L-glutamine + H2O = L-glutamate + NH4(+). It carries out the reaction UTP + NH4(+) + ATP = CTP + ADP + phosphate + 2 H(+). The protein operates within pyrimidine metabolism; CTP biosynthesis via de novo pathway; CTP from UDP: step 2/2. With respect to regulation, allosterically activated by GTP, when glutamine is the substrate; GTP has no effect on the reaction when ammonia is the substrate. The allosteric effector GTP functions by stabilizing the protein conformation that binds the tetrahedral intermediate(s) formed during glutamine hydrolysis. Inhibited by the product CTP, via allosteric rather than competitive inhibition. Functionally, catalyzes the ATP-dependent amination of UTP to CTP with either L-glutamine or ammonia as the source of nitrogen. Regulates intracellular CTP levels through interactions with the four ribonucleotide triphosphates. This chain is CTP synthase, found in Gluconacetobacter diazotrophicus (strain ATCC 49037 / DSM 5601 / CCUG 37298 / CIP 103539 / LMG 7603 / PAl5).